The sequence spans 382 residues: Regulatory protein RapC (382 aa).

5 TPR repeats span residues 102-138, 149-182, 183-216, 223-256, and 263-296; these read YYVNFFRGMYEFDKREFISAITYYKQAEKKLSFVADH, AEAYYYMKQTYFSLINIKNAYEIYVEQETYNVRI, IQCHFVFGVNLMDERNFEQAARHFKLALNMAQAE, GRAYYNLGLCYYNQDLLDPAIDYFEKAVSTFESS, and PQAYFLITLIYYKQGKHDKASEYHKRGYEYAKET.

The protein belongs to the Rap family. As to quaternary structure, homodimer. Interacts specifically with the C-terminal DNA-binding domain of ComA. Interacts with CSF.

It is found in the cytoplasm. Inhibited by the competence and sporulation stimulating factor (CSF), encoded by phrC, which prevents RapC-ComA interaction. Involved in the regulation of genetic competence development. Inhibits the activity of ComA, a transcriptional factor that regulates the development of genetic competence. Acts by binding to ComA, independently of its phosphorylation state, leading to the inhibition of ComA DNA-binding activity. Does not dephosphorylate phospho-ComA and does not affect the phosphorylation level of the ComP-ComA system. This chain is Regulatory protein RapC (rapC), found in Bacillus subtilis (strain 168).